The primary structure comprises 337 residues: m7GpppX diphosphatase (337 aa).

Residues 1–37 (MAELAHQQSKRKRELDAEEAEASSTEGEEAGVGNGTS) form a disordered region. At A2 the chain carries N-acetylalanine. The short motif at 10-13 (KRKR) is the nuclear localization signal (NLS) element. Residues 16–29 (DAEEAEASSTEGEE) are compositionally biased toward acidic residues. S24 and S101 each carry phosphoserine. 2 positions are modified to N6-acetyllysine: K138 and K142. The nuclear export sequence (NES) signature appears at 142-154 (KYLRQDLHLVRET). Substrate-binding positions include W175, E185, D205, K207, and 268 to 279 (HYLPSYYHLHVH). Residues 275–279 (HLHVH) carry the Histidine triad motif motif. The active-site Nucleophile is H277.

This sequence belongs to the HIT family. In terms of assembly, homodimer. Associates with components of the exosome multienzyme ribonuclease complex, such as EXOSC3 and EXOSC4. Interacts with NDOR1.

The protein localises to the cytoplasm. The protein resides in the nucleus. It carries out the reaction a 5'-end (N(7)-methyl 5'-triphosphoguanosine)-ribonucleoside in mRNA + H2O = N(7)-methyl-GMP + a 5'-end diphospho-ribonucleoside in mRNA + 2 H(+). Its activity is regulated as follows. The hydrolytic product 7-methylguanosine diphosphate (m7GDP) efficiently inhibits the decapping scavenger activity and acts as a competitive inhibitor in vitro. Inhibited by 2,4-diaminoquinazoline. Functionally, decapping scavenger enzyme that catalyzes the cleavage of a residual cap structure following the degradation of mRNAs by 3'-&gt;5' exosome-mediated mRNA decay pathway. Hydrolyzes cap analog structures like 7-methylguanosine nucleoside triphosphate (m7GpppG) with up to 10 nucleotide substrates (small capped oligoribonucleotides) and specifically releases 5'-phosphorylated RNA fragments and 7-methylguanosine monophosphate (m7GMP). Cleaves cap analog structures like tri-methyl guanosine nucleoside triphosphate (m3(2,2,7)GpppG) with very poor efficiency. Does not hydrolyze unmethylated cap analog (GpppG) and shows no decapping activity on intact m7GpppG-capped mRNA molecules longer than 25 nucleotides. Does not hydrolyze 7-methylguanosine diphosphate (m7GDP) to m7GMP. May also play a role in the 5'-&gt;3 mRNA decay pathway; m7GDP, the downstream product released by the 5'-&gt;3' mRNA mediated decapping activity, may be also converted by DCPS to m7GMP. Binds to m7GpppG and strongly to m7GDP. Plays a role in first intron splicing of pre-mRNAs. Inhibits activation-induced cell death. The polypeptide is m7GpppX diphosphatase (DCPS) (Bos taurus (Bovine)).